The following is a 434-amino-acid chain: MVVKFTKSEALHKEALEHIVGGVNSPSRSFKAVGGGAPVAMERGKGAYFWDVDGNKYIDYLAAYGPIITGHAHPHITKAITTAAENGVLYGTPTALEVKFAKMLKEAMPALDKVRFVNSGTEAVMTTIRVARAYTGRTKIMKFAGCYHGHSDLVLVAAGSGPSTLGTPDSAGVPQSIAQEVITVPFNNVETLKEALDKWGHEVAAILVEPIVGNFGIVEPKPGFLEKVNELVHEAGALVIYDEVITAFRFMYGGAQDLLGVTPDLTALGKVIGGGLPIGAYGGKKEIMEQVAPLGPAYQAGTMAGNPASMASGIACLEVLQQEGLYEKLDELGAMLEKGILEQAAKHNIDITLNRLKGALTVYFTTNTIEDYDAAQDTDGEMFGKFFKLMLQEGVNLAPSKYEAWFLTTEHTKEDIEYTIEAVGRAFATLADNK.

Position 270 is an N6-(pyridoxal phosphate)lysine (K270).

Belongs to the class-III pyridoxal-phosphate-dependent aminotransferase family. HemL subfamily. As to quaternary structure, homodimer. Pyridoxal 5'-phosphate is required as a cofactor.

The protein resides in the cytoplasm. It carries out the reaction (S)-4-amino-5-oxopentanoate = 5-aminolevulinate. The protein operates within porphyrin-containing compound metabolism; protoporphyrin-IX biosynthesis; 5-aminolevulinate from L-glutamyl-tRNA(Glu): step 2/2. The sequence is that of Glutamate-1-semialdehyde 2,1-aminomutase 1 from Bacillus thuringiensis (strain Al Hakam).